A 193-amino-acid polypeptide reads, in one-letter code: Thymidine kinase (193 aa).

ATP is bound by residues 9–16 and 87–90; these read ASMNAGKS and DEAQ. The Proton acceptor role is filled by glutamate 88. Zn(2+) is bound by residues cysteine 145, cysteine 147, cysteine 182, and histidine 185.

The protein belongs to the thymidine kinase family. Homotetramer.

It is found in the cytoplasm. The catalysed reaction is thymidine + ATP = dTMP + ADP + H(+). This Zymomonas mobilis subsp. mobilis (strain ATCC 31821 / ZM4 / CP4) protein is Thymidine kinase.